The primary structure comprises 424 residues: Protein ImpB (424 aa).

The 188-residue stretch at 2 to 189 (FALADINSFY…QPVGEVWGVG (188 aa)) folds into the UmuC domain.

It belongs to the DNA polymerase type-Y family.

Its function is as follows. Involved in UV protection and mutation. This Salmonella typhimurium protein is Protein ImpB (impB).